Here is a 221-residue protein sequence, read N- to C-terminus: ATP synthase subunit a 1 (221 aa).

5 helical membrane-spanning segments follow: residues 20-40 (LTIV…ALIT), 78-98 (YLPF…CTVI), 108-128 (LSTT…FGIA), 174-194 (MILV…MNIL), and 196-216 (LLTG…YIAA).

The protein belongs to the ATPase A chain family. As to quaternary structure, F-type ATPases have 2 components, CF(1) - the catalytic core - and CF(0) - the membrane proton channel. CF(1) has five subunits: alpha(3), beta(3), gamma(1), delta(1), epsilon(1). CF(0) has four main subunits: a, b, b' and c.

It is found in the cell inner membrane. Functionally, key component of the proton channel; it plays a direct role in the translocation of protons across the membrane. The chain is ATP synthase subunit a 1 from Chlorobaculum tepidum (strain ATCC 49652 / DSM 12025 / NBRC 103806 / TLS) (Chlorobium tepidum).